We begin with the raw amino-acid sequence, 358 residues long: Thiol protease aleurain (358 aa).

An N-terminal signal peptide occupies residues 1 to 21; the sequence is MSAKTILSSVVLVVLVAASAA. An interaction with VSR1 region spans residues 22 to 42; that stretch reads ANIGFDESNPIRMVSDGLREV. The propeptide at 22-140 is activation peptide; sequence ANIGFDESNP…KGSHKVTEAA (119 aa). N-linked (GlcNAc...) asparagine glycosylation occurs at Asn125. Disulfide bonds link Cys162-Cys205 and Cys196-Cys238. The active site involves Cys165. The N-linked (GlcNAc...) asparagine glycan is linked to Asn254. Residues Cys296 and Cys346 are joined by a disulfide bond. Catalysis depends on residues His305 and Asn325.

It belongs to the peptidase C1 family. Interacts with VSR1/BP80B. Expressed in leaves (at protein level).

It localises to the vacuole. It catalyses the reaction Hydrolysis of proteins, acting as an aminopeptidase (notably, cleaving Arg-|-Xaa bonds) as well as an endopeptidase.. May play a role in proteolysis leading to mobilization of nitrogen during senescence and starvation. The polypeptide is Thiol protease aleurain (Arabidopsis thaliana (Mouse-ear cress)).